Reading from the N-terminus, the 693-residue chain is Elongation factor G (693 aa).

Positions 8 to 282 constitute a tr-type G domain; it reads EKTRNIGIMA…AVIDYLPSPL (275 aa). Residues 17 to 24, 81 to 85, and 135 to 138 contribute to the GTP site; these read AHIDAGKT, DTPGH, and NKMD.

Belongs to the TRAFAC class translation factor GTPase superfamily. Classic translation factor GTPase family. EF-G/EF-2 subfamily.

The protein localises to the cytoplasm. Catalyzes the GTP-dependent ribosomal translocation step during translation elongation. During this step, the ribosome changes from the pre-translocational (PRE) to the post-translocational (POST) state as the newly formed A-site-bound peptidyl-tRNA and P-site-bound deacylated tRNA move to the P and E sites, respectively. Catalyzes the coordinated movement of the two tRNA molecules, the mRNA and conformational changes in the ribosome. In Staphylococcus aureus (strain Mu3 / ATCC 700698), this protein is Elongation factor G.